A 252-amino-acid chain; its full sequence is 2-succinyl-6-hydroxy-2,4-cyclohexadiene-1-carboxylate synthase (252 aa).

This sequence belongs to the AB hydrolase superfamily. MenH family. Monomer.

It carries out the reaction 5-enolpyruvoyl-6-hydroxy-2-succinyl-cyclohex-3-ene-1-carboxylate = (1R,6R)-6-hydroxy-2-succinyl-cyclohexa-2,4-diene-1-carboxylate + pyruvate. Its pathway is quinol/quinone metabolism; 1,4-dihydroxy-2-naphthoate biosynthesis; 1,4-dihydroxy-2-naphthoate from chorismate: step 3/7. The protein operates within quinol/quinone metabolism; menaquinone biosynthesis. Catalyzes a proton abstraction reaction that results in 2,5-elimination of pyruvate from 2-succinyl-5-enolpyruvyl-6-hydroxy-3-cyclohexene-1-carboxylate (SEPHCHC) and the formation of 2-succinyl-6-hydroxy-2,4-cyclohexadiene-1-carboxylate (SHCHC). In Salmonella heidelberg (strain SL476), this protein is 2-succinyl-6-hydroxy-2,4-cyclohexadiene-1-carboxylate synthase.